The following is an 80-amino-acid chain: Defensin coprisin (80 aa).

The N-terminal stretch at 1–20 is a signal peptide; the sequence is MAKLIAFALVASLCLSMVLC. Positions 21–37 are excised as a propeptide; sequence NPLPEEVQEEGLVRQKR. 3 disulfides stabilise this stretch: cysteine 40–cysteine 71, cysteine 57–cysteine 76, and cysteine 61–cysteine 78.

It belongs to the invertebrate defensin family. Type 1 subfamily.

It localises to the secreted. The protein resides in the target cell membrane. Its function is as follows. Potent broad-spectrum antibacterial peptide against both Gram-positive (B.subtilis, S.epidermidis, and S.aureus) and Gram-negative bacteria (E.coli, S.typhimurium, and P.aeruginosa). Is also active against all antibiotic-resistant bacterial strains tested. Induces apoptosis in C.albicans, but does not disrupt the fungal plasma membrane at all. Acts by permeabilizing the bacterial cell membrane, but not human membranes. Also shows potent anti-inflammatory activities, since it reduces both LPS-induced nitric oxide release and pro-inflammatory cytokine production. Anti-inflammatory activities are initiated by suppressing the binding of LPS to toll-like receptor 4 (TLR4), and subsequently inhibiting the phosphorylation of p38 mitogen-activated protein kinase (MAPK) and nuclear translocation of NF-kB (TNFRSF11A). Does not show hemolytic activity against human erythrocytes. This Copris tripartitus (Dung beetle) protein is Defensin coprisin.